The following is a 1141-amino-acid chain: Putative late blight resistance protein homolog R1B-13 (1141 aa).

Positions Asp-417 to Gln-437 form a coiled coil. In terms of domain architecture, NB-ARC spans Thr-516–Leu-742. 5 LRR repeats span residues Phe-826 to Arg-851, Leu-869 to Met-894, Ala-992 to His-1016, Leu-1017 to Gly-1041, and Phe-1043 to Ile-1068.

This sequence belongs to the disease resistance NB-LRR family.

It is found in the cytoplasm. Its subcellular location is the membrane. Confers resistance to late blight (Phytophthora infestans) races carrying the avirulence gene Avr1. Resistance proteins guard the plant against pathogens that contain an appropriate avirulence protein via an indirect interaction with this avirulence protein. That triggers a defense system including the hypersensitive response, which restricts the pathogen growth. The polypeptide is Putative late blight resistance protein homolog R1B-13 (R1B-13) (Solanum demissum (Wild potato)).